We begin with the raw amino-acid sequence, 275 residues long: Membrane protein insertase YidC 1 (275 aa).

Positions 1 to 25 (MRKVLRVKKNIKIARIVPLVLLLVA) are cleaved as a signal peptide. Cysteine 26 carries the N-palmitoyl cysteine lipid modification. Residue cysteine 26 is the site of S-diacylglycerol cysteine attachment. 5 helical membrane passes run 58 to 78 (SIGV…MPLF), 129 to 149 (YASL…FQAL), 171 to 191 (LYLL…LTNL), 198 to 216 (VMMT…FMGF), and 222 to 240 (VVLY…LLLL).

This sequence belongs to the OXA1/ALB3/YidC family. Type 2 subfamily.

It localises to the cell membrane. Required for the insertion and/or proper folding and/or complex formation of integral membrane proteins into the membrane. Involved in integration of membrane proteins that insert both dependently and independently of the Sec translocase complex, as well as at least some lipoproteins. The protein is Membrane protein insertase YidC 1 of Streptococcus pyogenes serotype M1.